The primary structure comprises 453 residues: tRNA modification GTPase MnmE (453 aa).

Positions 22, 79, and 119 each coordinate (6S)-5-formyl-5,6,7,8-tetrahydrofolate. Residues 215-376 (GMKVVIAGRP…LRQHLKECMG (162 aa)) enclose the TrmE-type G domain. N225 contacts K(+). GTP is bound by residues 225-230 (NAGKSS), 244-250 (TDIAGTT), 269-272 (DTAG), and 334-337 (NKAD). S229 serves as a coordination point for Mg(2+). Residues T244, I246, and T249 each contribute to the K(+) site. Residue T250 coordinates Mg(2+). (6S)-5-formyl-5,6,7,8-tetrahydrofolate is bound at residue K453.

The protein belongs to the TRAFAC class TrmE-Era-EngA-EngB-Septin-like GTPase superfamily. TrmE GTPase family. Homodimer. Heterotetramer of two MnmE and two MnmG subunits. It depends on K(+) as a cofactor.

Its subcellular location is the cytoplasm. In terms of biological role, exhibits a very high intrinsic GTPase hydrolysis rate. Involved in the addition of a carboxymethylaminomethyl (cmnm) group at the wobble position (U34) of certain tRNAs, forming tRNA-cmnm(5)s(2)U34. The sequence is that of tRNA modification GTPase MnmE from Vibrio cholerae serotype O1 (strain ATCC 39315 / El Tor Inaba N16961).